A 706-amino-acid polypeptide reads, in one-letter code: Capsid vertex component 1 (706 aa).

Residues 321-347 are disordered; that stretch reads DSGRFVNSGPQRHLPPQGPRSPASRDC.

The protein belongs to the herpesviridae CVC1 protein family. As to quaternary structure, interacts (via C-terminus) with capsid vertex component 2/CVC2.

The protein localises to the virion. Its subcellular location is the host nucleus. Capsid vertex-specific component that plays a role during viral DNA encapsidation, assuring correct genome cleavage and presumably stabilizing capsids that contain full-length viral genomes. The protein is Capsid vertex component 1 of Equus caballus (Horse).